The primary structure comprises 307 residues: Porphobilinogen deaminase (307 aa).

Position 239 is an S-(dipyrrolylmethanemethyl)cysteine (Cys-239).

This sequence belongs to the HMBS family. Monomer. Requires dipyrromethane as cofactor.

It catalyses the reaction 4 porphobilinogen + H2O = hydroxymethylbilane + 4 NH4(+). Its pathway is porphyrin-containing compound metabolism; protoporphyrin-IX biosynthesis; coproporphyrinogen-III from 5-aminolevulinate: step 2/4. Functionally, tetrapolymerization of the monopyrrole PBG into the hydroxymethylbilane pre-uroporphyrinogen in several discrete steps. The sequence is that of Porphobilinogen deaminase from Campylobacter jejuni subsp. doylei (strain ATCC BAA-1458 / RM4099 / 269.97).